We begin with the raw amino-acid sequence, 463 residues long: uncharacterized protein (463 aa).

Helical transmembrane passes span 3-23 (IPPEVHSGLLSAGCGPGSLLV), 88-108 (VAAAAAYCSALAAMPTPAELA), 112-132 (AIHGVLIATNFFGINTVPIAL), 216-236 (FSPAVTVVLALVALQLYDFLW), 245-265 (LLLLPFFTPTLSALTALSALI), and 276-296 (LPIAAALGPGDQWGANLAVAV). Positions 303-322 (VPGGSPPTSNPAPAAPSSNS) are disordered. Over residues 306–316 (GSPPTSNPAPA) the composition is skewed to pro residues. 2 helical membrane passes run 323 to 343 (VGSASAAPGISYAVPGLAPPG) and 419 to 439 (AGTLGFAGTAPTTSGAAAGMV).

This sequence belongs to the mycobacterial PPE family.

The protein resides in the cell membrane. This is an uncharacterized protein from Mycobacterium tuberculosis (strain CDC 1551 / Oshkosh).